A 339-amino-acid polypeptide reads, in one-letter code: DNA-directed RNA polymerase subunit alpha (339 aa).

The interval 1 to 233 (MVREEITGST…DLFLPFLHTE (233 aa)) is alpha N-terminal domain (alpha-NTD). The segment at 264–339 (KKGIPLNCIF…IDLPKNKFSL (76 aa)) is alpha C-terminal domain (alpha-CTD).

The protein belongs to the RNA polymerase alpha chain family. In terms of assembly, in plastids the minimal PEP RNA polymerase catalytic core is composed of four subunits: alpha, beta, beta', and beta''. When a (nuclear-encoded) sigma factor is associated with the core the holoenzyme is formed, which can initiate transcription.

The protein resides in the plastid. It localises to the chloroplast. It carries out the reaction RNA(n) + a ribonucleoside 5'-triphosphate = RNA(n+1) + diphosphate. DNA-dependent RNA polymerase catalyzes the transcription of DNA into RNA using the four ribonucleoside triphosphates as substrates. The sequence is that of DNA-directed RNA polymerase subunit alpha from Zea mays (Maize).